The sequence spans 445 residues: C4-dicarboxylate transport protein (445 aa).

Transmembrane regions (helical) follow at residues V24 to P44, L62 to I82, F105 to A125, G163 to G183, F201 to F221, L237 to A257, I322 to T342, and A370 to I390.

Belongs to the dicarboxylate/amino acid:cation symporter (DAACS) (TC 2.A.23) family.

The protein resides in the cell inner membrane. Responsible for the transport of dicarboxylates such as succinate, fumarate, and malate from the periplasm across the membrane. In Rhodopseudomonas palustris (strain BisB5), this protein is C4-dicarboxylate transport protein.